The sequence spans 752 residues: Photosystem I P700 chlorophyll a apoprotein A1 (752 aa).

8 consecutive transmembrane segments (helical) span residues 73-96 (IFSA…FHGA), 159-182 (LYVT…FHYH), 198-222 (LNHH…HVSL), 294-312 (IAHH…GHMY), 349-372 (WHAN…HHMY), 388-414 (LSLF…IFMI), 436-458 (ALIS…LYIH), and 533-551 (FMVH…LILL). [4Fe-4S] cluster contacts are provided by cysteine 575 and cysteine 584. 2 consecutive transmembrane segments (helical) span residues 591–612 (HVFL…HFSW) and 666–688 (ISAY…MFLF). Residue histidine 677 coordinates chlorophyll a'. Residues methionine 685 and tyrosine 693 each coordinate chlorophyll a. Tryptophan 694 contributes to the phylloquinone binding site. The helical transmembrane segment at 726–746 (AVGAAHYLLGGIATTWAFFLS) threads the bilayer.

The protein belongs to the PsaA/PsaB family. The PsaA/B heterodimer binds the P700 chlorophyll special pair and subsequent electron acceptors. PSI consists of a core antenna complex that captures photons, and an electron transfer chain that converts photonic excitation into a charge separation. The eukaryotic PSI reaction center is composed of at least 11 subunits. P700 is a chlorophyll a/chlorophyll a' dimer, A0 is one or more chlorophyll a, A1 is one or both phylloquinones and FX is a shared 4Fe-4S iron-sulfur center. is required as a cofactor.

Its subcellular location is the plastid. The protein localises to the chloroplast thylakoid membrane. The enzyme catalyses reduced [plastocyanin] + hnu + oxidized [2Fe-2S]-[ferredoxin] = oxidized [plastocyanin] + reduced [2Fe-2S]-[ferredoxin]. In terms of biological role, psaA and PsaB bind P700, the primary electron donor of photosystem I (PSI), as well as the electron acceptors A0, A1 and FX. PSI is a plastocyanin/cytochrome c6-ferredoxin oxidoreductase, converting photonic excitation into a charge separation, which transfers an electron from the donor P700 chlorophyll pair to the spectroscopically characterized acceptors A0, A1, FX, FA and FB in turn. Oxidized P700 is reduced on the lumenal side of the thylakoid membrane by plastocyanin or cytochrome c6. This chain is Photosystem I P700 chlorophyll a apoprotein A1, found in Cyanidium caldarium (Red alga).